A 141-amino-acid chain; its full sequence is Hemoglobin subunit alpha-A (141 aa).

The 141-residue stretch at 1–141 folds into the Globin domain; it reads VLSAADKTNV…VSTVLTAKYR (141 aa). Histidine 58 contacts O2. Histidine 87 is a heme b binding site.

This sequence belongs to the globin family. In terms of assembly, heterotetramer of two alpha chains and two beta chains. As to expression, red blood cells.

Functionally, involved in oxygen transport from the lung to the various peripheral tissues. In Eudynamys scolopaceus (Western koel), this protein is Hemoglobin subunit alpha-A (HBAA).